Consider the following 764-residue polypeptide: Zinc finger CCCH domain-containing protein 24 (764 aa).

ANK repeat units follow at residues 108 to 138 (EHRT…DVNR) and 143 to 175 (DGTT…DADA). The C3H1-type zinc-finger motif lies at 321–348 (HYSCVPCPDFRKGVCRRGDMCEYAHGVF). Disordered regions lie at residues 616 to 665 (QREK…DWGV) and 698 to 732 (KESP…EGPS). Low complexity predominate over residues 640–659 (SGVVGSPLSSSWSKWGSPSG). Positions 705–716 (QVTTAESINSVG) are enriched in polar residues.

The chain is Zinc finger CCCH domain-containing protein 24 from Oryza sativa subsp. japonica (Rice).